The following is a 240-amino-acid chain: UDP-2,3-diacylglucosamine hydrolase (240 aa).

Mn(2+) contacts are provided by aspartate 8, histidine 10, aspartate 41, asparagine 79, and histidine 114. Asparagine 79–arginine 80 lines the substrate pocket. 5 residues coordinate substrate: aspartate 122, serine 160, asparagine 164, lysine 167, and histidine 195. Mn(2+) is bound by residues histidine 195 and histidine 197.

This sequence belongs to the LpxH family. Mn(2+) serves as cofactor.

It localises to the cell inner membrane. It carries out the reaction UDP-2-N,3-O-bis[(3R)-3-hydroxytetradecanoyl]-alpha-D-glucosamine + H2O = 2-N,3-O-bis[(3R)-3-hydroxytetradecanoyl]-alpha-D-glucosaminyl 1-phosphate + UMP + 2 H(+). It participates in glycolipid biosynthesis; lipid IV(A) biosynthesis; lipid IV(A) from (3R)-3-hydroxytetradecanoyl-[acyl-carrier-protein] and UDP-N-acetyl-alpha-D-glucosamine: step 4/6. Hydrolyzes the pyrophosphate bond of UDP-2,3-diacylglucosamine to yield 2,3-diacylglucosamine 1-phosphate (lipid X) and UMP by catalyzing the attack of water at the alpha-P atom. Involved in the biosynthesis of lipid A, a phosphorylated glycolipid that anchors the lipopolysaccharide to the outer membrane of the cell. The chain is UDP-2,3-diacylglucosamine hydrolase from Pectobacterium atrosepticum (strain SCRI 1043 / ATCC BAA-672) (Erwinia carotovora subsp. atroseptica).